The chain runs to 126 residues: Large ribosomal subunit protein bL12 (126 aa).

The protein belongs to the bacterial ribosomal protein bL12 family. In terms of assembly, homodimer. Part of the ribosomal stalk of the 50S ribosomal subunit. Forms a multimeric L10(L12)X complex, where L10 forms an elongated spine to which 2 to 4 L12 dimers bind in a sequential fashion. Binds GTP-bound translation factors.

Its function is as follows. Forms part of the ribosomal stalk which helps the ribosome interact with GTP-bound translation factors. Is thus essential for accurate translation. This is Large ribosomal subunit protein bL12 from Koribacter versatilis (strain Ellin345).